We begin with the raw amino-acid sequence, 110 residues long: Serum amyloid A protein (110 aa).

Positions 73–110 (GGSGRGAEDSRADQAANEWGRSGKDPNHFRPHGLPDKY) are disordered. Residues 93-110 (RSGKDPNHFRPHGLPDKY) are compositionally biased toward basic and acidic residues.

It belongs to the SAA family. Post-translationally, this protein is the precursor of amyloid protein A, which is formed by the removal of residues from the C-terminal end. In terms of tissue distribution, expressed by the liver; secreted in plasma.

Its function is as follows. Major acute phase reactant. Apolipoprotein of the HDL complex. This is Serum amyloid A protein (SAA1) from Equus caballus (Horse).